Consider the following 461-residue polypeptide: Argininosuccinate lyase (461 aa).

The protein belongs to the lyase 1 family. Argininosuccinate lyase subfamily.

The protein resides in the cytoplasm. The catalysed reaction is 2-(N(omega)-L-arginino)succinate = fumarate + L-arginine. It participates in amino-acid biosynthesis; L-arginine biosynthesis; L-arginine from L-ornithine and carbamoyl phosphate: step 3/3. The protein is Argininosuccinate lyase of Symbiobacterium thermophilum (strain DSM 24528 / JCM 14929 / IAM 14863 / T).